The sequence spans 1113 residues: Cytospin-A (1113 aa).

Residues methionine 1–aspartate 160 form a disordered region. Positions alanine 59–threonine 103 are enriched in polar residues. Basic and acidic residues predominate over residues serine 145 to serine 154. The stretch at alanine 220–glycine 259 forms a coiled coil. A disordered region spans residues alanine 284–glutamate 374. Low complexity predominate over residues serine 338–alanine 358. Coiled-coil stretches lie at residues cysteine 379–leucine 433 and methionine 473–valine 791. Disordered regions lie at residues glutamine 766 to aspartate 785, phenylalanine 832 to proline 902, glycine 914 to serine 957, and alanine 972 to proline 997. Residues serine 834–serine 845 are compositionally biased toward low complexity. Over residues proline 856–threonine 867 the composition is skewed to pro residues. Positions glutamine 925 to arginine 940 are enriched in polar residues. The segment covering arginine 941–alanine 951 has biased composition (basic and acidic residues). Residues alanine 972–serine 981 are compositionally biased toward low complexity. Positions glycine 1007–glutamate 1112 constitute a Calponin-homology (CH) domain.

Belongs to the cytospin-A family. As to quaternary structure, may interact with both microtubules and actin cytoskeleton.

It localises to the cytoplasm. The protein localises to the cytoskeleton. Its subcellular location is the spindle. The protein resides in the cell junction. It is found in the gap junction. In terms of biological role, involved in cytokinesis and spindle organization. May play a role in actin cytoskeleton organization and microtubule stabilization and hence required for proper cell adhesion and migration. The chain is Cytospin-A (specc1l) from Tetraodon nigroviridis (Spotted green pufferfish).